The chain runs to 202 residues: Dephospho-CoA kinase (202 aa).

The region spanning 4 to 200 (VVGVTGGIGS…QRYLAATVAQ (197 aa)) is the DPCK domain. Residue 12 to 17 (GSGKSA) coordinates ATP.

Belongs to the CoaE family.

Its subcellular location is the cytoplasm. It carries out the reaction 3'-dephospho-CoA + ATP = ADP + CoA + H(+). It functions in the pathway cofactor biosynthesis; coenzyme A biosynthesis; CoA from (R)-pantothenate: step 5/5. Its function is as follows. Catalyzes the phosphorylation of the 3'-hydroxyl group of dephosphocoenzyme A to form coenzyme A. This chain is Dephospho-CoA kinase, found in Idiomarina loihiensis (strain ATCC BAA-735 / DSM 15497 / L2-TR).